A 469-amino-acid chain; its full sequence is Uronate isomerase (469 aa).

The protein belongs to the metallo-dependent hydrolases superfamily. Uronate isomerase family.

It carries out the reaction D-glucuronate = D-fructuronate. It catalyses the reaction aldehydo-D-galacturonate = keto-D-tagaturonate. Its pathway is carbohydrate metabolism; pentose and glucuronate interconversion. The chain is Uronate isomerase from Rhizobium meliloti (strain 1021) (Ensifer meliloti).